Consider the following 186-residue polypeptide: Translation initiation factor IF-3 (186 aa).

Belongs to the IF-3 family. In terms of assembly, monomer.

It is found in the cytoplasm. IF-3 binds to the 30S ribosomal subunit and shifts the equilibrium between 70S ribosomes and their 50S and 30S subunits in favor of the free subunits, thus enhancing the availability of 30S subunits on which protein synthesis initiation begins. The chain is Translation initiation factor IF-3 from Borreliella burgdorferi (strain ATCC 35210 / DSM 4680 / CIP 102532 / B31) (Borrelia burgdorferi).